Reading from the N-terminus, the 343-residue chain is Probable potassium channel protein 2 (343 aa).

Residues Met1–Leu7 are Cytoplasmic-facing. A helical membrane pass occupies residues Val8 to Ile28. At Glu29–Thr61 the chain is on the extracellular side. A Selectivity filter motif is present at residues Thr46–Asp51. Residues Leu62–Ala82 traverse the membrane as a helical segment. Residues Glu83–Leu343 lie on the Cytoplasmic side of the membrane. The RCK N-terminal domain occupies Lys107 to Ser227. The 86-residue stretch at Ile253–Lys338 folds into the RCK C-terminal domain.

The protein localises to the cell membrane. Its function is as follows. Probable potassium channel protein. The chain is Probable potassium channel protein 2 from Methanocaldococcus jannaschii (strain ATCC 43067 / DSM 2661 / JAL-1 / JCM 10045 / NBRC 100440) (Methanococcus jannaschii).